A 232-amino-acid chain; its full sequence is Large ribosomal subunit protein uL1 (232 aa).

It belongs to the universal ribosomal protein uL1 family. In terms of assembly, part of the 50S ribosomal subunit.

Its function is as follows. Binds directly to 23S rRNA. The L1 stalk is quite mobile in the ribosome, and is involved in E site tRNA release. In terms of biological role, protein L1 is also a translational repressor protein, it controls the translation of the L11 operon by binding to its mRNA. The polypeptide is Large ribosomal subunit protein uL1 (Dinoroseobacter shibae (strain DSM 16493 / NCIMB 14021 / DFL 12)).